The sequence spans 63 residues: MKAQELRNKNVEELNAELINLLGEQFKLRMQAATGQLQQTHQLKQVRRSIAQVKTVLTEKAGE.

This sequence belongs to the universal ribosomal protein uL29 family.

The polypeptide is Large ribosomal subunit protein uL29 (Actinobacillus pleuropneumoniae serotype 5b (strain L20)).